We begin with the raw amino-acid sequence, 59 residues long: Large ribosomal subunit protein bL32 (59 aa).

A compositionally biased stretch (basic residues) spans 1–19; sequence MPVPKRRMSRSNTRSRRAQ. A disordered region spans residues 1 to 20; that stretch reads MPVPKRRMSRSNTRSRRAQW.

Belongs to the bacterial ribosomal protein bL32 family.

The sequence is that of Large ribosomal subunit protein bL32 from Acidothermus cellulolyticus (strain ATCC 43068 / DSM 8971 / 11B).